A 72-amino-acid polypeptide reads, in one-letter code: Protein RALF-like 20 (72 aa).

An N-terminal signal peptide occupies residues 1-27 (MVLSKKTIMQSFALMIILSIVMSTTEA). Intrachain disulfides connect Cys43-Cys51 and Cys63-Cys69.

This sequence belongs to the plant rapid alkalinization factor (RALF) family.

The protein localises to the secreted. Functionally, cell signaling peptide that may regulate plant stress, growth, and development. Mediates a rapid alkalinization of extracellular space by mediating a transient increase in the cytoplasmic Ca(2+) concentration leading to a calcium-dependent signaling events through a cell surface receptor and a concomitant activation of some intracellular mitogen-activated protein kinases. The protein is Protein RALF-like 20 (RALFL20) of Arabidopsis thaliana (Mouse-ear cress).